We begin with the raw amino-acid sequence, 384 residues long: 8-amino-7-oxononanoate synthase (384 aa).

Arg-21 is a binding site for substrate. 108–109 contacts pyridoxal 5'-phosphate; sequence GF. His-133 lines the substrate pocket. The pyridoxal 5'-phosphate site is built by Ser-179, His-207, and Thr-233. Lys-236 bears the N6-(pyridoxal phosphate)lysine mark. Thr-352 contacts substrate.

This sequence belongs to the class-II pyridoxal-phosphate-dependent aminotransferase family. BioF subfamily. Homodimer. It depends on pyridoxal 5'-phosphate as a cofactor.

The catalysed reaction is 6-carboxyhexanoyl-[ACP] + L-alanine + H(+) = (8S)-8-amino-7-oxononanoate + holo-[ACP] + CO2. It participates in cofactor biosynthesis; biotin biosynthesis. Functionally, catalyzes the decarboxylative condensation of pimeloyl-[acyl-carrier protein] and L-alanine to produce 8-amino-7-oxononanoate (AON), [acyl-carrier protein], and carbon dioxide. The sequence is that of 8-amino-7-oxononanoate synthase from Escherichia coli O7:K1 (strain IAI39 / ExPEC).